The chain runs to 1142 residues: DNA-directed RNA polymerase subunit beta N-terminal section (1142 aa).

Belongs to the RNA polymerase beta chain family. In terms of assembly, in plastids the minimal PEP RNA polymerase catalytic core is composed of four subunits: alpha, beta, beta', and beta''. When a (nuclear-encoded) sigma factor is associated with the core the holoenzyme is formed, which can initiate transcription.

Its subcellular location is the plastid. It localises to the chloroplast. The catalysed reaction is RNA(n) + a ribonucleoside 5'-triphosphate = RNA(n+1) + diphosphate. Functionally, DNA-dependent RNA polymerase catalyzes the transcription of DNA into RNA using the four ribonucleoside triphosphates as substrates. This is DNA-directed RNA polymerase subunit beta N-terminal section (rpoB1) from Pleurastrum terricola (Filamentous green alga).